A 337-amino-acid polypeptide reads, in one-letter code: Putative F-box protein At4g09870 (337 aa).

One can recognise an F-box domain in the interval 1–46 (MSISELSQDLLEEILCRVPAISLKKLRSTCKLWNSLFIDKRVRNEL).

This is Putative F-box protein At4g09870 from Arabidopsis thaliana (Mouse-ear cress).